Consider the following 303-residue polypeptide: Aspartate carbamoyltransferase catalytic subunit (303 aa).

Residues R51 and T52 each coordinate carbamoyl phosphate. An L-aspartate-binding site is contributed by K80. Residues R101, H129, and Q132 each contribute to the carbamoyl phosphate site. 2 residues coordinate L-aspartate: R162 and R221. Carbamoyl phosphate-binding residues include L260 and P261.

It belongs to the aspartate/ornithine carbamoyltransferase superfamily. ATCase family. In terms of assembly, heterooligomer of catalytic and regulatory chains.

It catalyses the reaction carbamoyl phosphate + L-aspartate = N-carbamoyl-L-aspartate + phosphate + H(+). It functions in the pathway pyrimidine metabolism; UMP biosynthesis via de novo pathway; (S)-dihydroorotate from bicarbonate: step 2/3. In terms of biological role, catalyzes the condensation of carbamoyl phosphate and aspartate to form carbamoyl aspartate and inorganic phosphate, the committed step in the de novo pyrimidine nucleotide biosynthesis pathway. The protein is Aspartate carbamoyltransferase catalytic subunit of Saccharolobus islandicus (strain M.16.4 / Kamchatka #3) (Sulfolobus islandicus).